The primary structure comprises 658 residues: Transmembrane 9 superfamily member 11 (658 aa).

The first 23 residues, 1–23, serve as a signal peptide directing secretion; that stretch reads MRSMDRFGIWVLAILLVIQSSFG. The Lumenal segment spans residues 24-291; it reads FYLPGSYPHK…LKMEGSKVHW (268 aa). The helical transmembrane segment at 292 to 312 threads the bilayer; it reads FSILNSLMVITFLAGIVLVIF. At 313-364 the chain is on the cytoplasmic side; that stretch reads LRTVRRDLTRYEELDKEAQAQMNEELSGWKLVVGDVFRAPSNASLLCVMVGD. Residues 365-385 traverse the membrane as a helical segment; that stretch reads GVQILGMAVVTILFAALGFMS. At 386-391 the chain is on the lumenal side; sequence PASRGT. A helical membrane pass occupies residues 392 to 412; that stretch reads LITGMLFFYMILGIAAGYVSV. Over 413–432 the chain is Cytoplasmic; the sequence is RLWRTIGCGEHRGWMSVAWK. Residues 433–453 form a helical membrane-spanning segment; the sequence is AACFFPGIAFLILTTLNFLLW. The Lumenal portion of the chain corresponds to 454-462; that stretch reads GSHSTGAIP. The chain crosses the membrane as a helical span at residues 463-483; it reads FSLFVILLLLWFCISVPLTLI. The Cytoplasmic portion of the chain corresponds to 484-515; it reads GGYFGAKAPHIEFPVRTNQIPREIPAQKYPSW. The helical transmembrane segment at 516-536 threads the bilayer; the sequence is LLVLGAGTLPFGTLFIELFFI. Over 537-547 the chain is Lumenal; sequence MSSIWMGRVYY. Residues 548 to 568 form a helical membrane-spanning segment; the sequence is VFGFLFVVLILLVVVCAEVSL. At 569–586 the chain is on the cytoplasmic side; it reads VLTYMHLCVEDYKWWWKS. A helical transmembrane segment spans residues 587 to 607; it reads FFASGSVAIYIFIYSINYLVF. The Lumenal segment spans residues 608-619; it reads DLKSLSGPVSAT. Residues 620–640 traverse the membrane as a helical segment; it reads LYLGYSLFMVLAIMLATGTVG. The Cytoplasmic segment spans residues 641–658; sequence FLSSFWFVHYLFSSVKLD. Residues 647 to 652 carry the Endoplasmic reticulum export signal motif; sequence FVHYLF. A Golgi retention signal motif is present at residues 656-658; that stretch reads KLD.

Belongs to the nonaspanin (TM9SF) (TC 9.A.2) family.

The protein localises to the endosome membrane. The protein resides in the golgi apparatus membrane. This chain is Transmembrane 9 superfamily member 11, found in Arabidopsis thaliana (Mouse-ear cress).